Here is a 365-residue protein sequence, read N- to C-terminus: 3-isopropylmalate dehydrogenase (365 aa).

An NAD(+)-binding site is contributed by 76-89 (GPKWDQNPSELRPE). Substrate is bound by residues Arg-96, Arg-106, Arg-134, and Asp-224. Mg(2+)-binding residues include Asp-224, Asp-248, and Asp-252. 282-294 (GSAPDIAGKGMAN) contributes to the NAD(+) binding site.

The protein belongs to the isocitrate and isopropylmalate dehydrogenases family. LeuB type 1 subfamily. As to quaternary structure, homodimer. Mg(2+) serves as cofactor. Mn(2+) is required as a cofactor.

It is found in the cytoplasm. The catalysed reaction is (2R,3S)-3-isopropylmalate + NAD(+) = 4-methyl-2-oxopentanoate + CO2 + NADH. It functions in the pathway amino-acid biosynthesis; L-leucine biosynthesis; L-leucine from 3-methyl-2-oxobutanoate: step 3/4. Its function is as follows. Catalyzes the oxidation of 3-carboxy-2-hydroxy-4-methylpentanoate (3-isopropylmalate) to 3-carboxy-4-methyl-2-oxopentanoate. The product decarboxylates to 4-methyl-2 oxopentanoate. The protein is 3-isopropylmalate dehydrogenase (leuB) of Bacillus subtilis (strain 168).